The primary structure comprises 78 residues: Protein FAM240B (78 aa).

Belongs to the FAM240 family.

This is Protein FAM240B from Homo sapiens (Human).